A 1222-amino-acid chain; its full sequence is ATP-dependent helicase/nuclease subunit A (1222 aa).

The region spanning 39–495 (QKRTAQQIEA…ILLKENFRSQ (457 aa)) is the UvrD-like helicase ATP-binding domain. 60–67 (ASAGSGKT) serves as a coordination point for ATP. In terms of domain architecture, UvrD-like helicase C-terminal spans 524-810 (QLIAGSHAQT…NLMTIHKSKG (287 aa)).

The protein belongs to the helicase family. AddA subfamily. Heterodimer of AddA and AddB/RexB. The cofactor is Mg(2+).

The catalysed reaction is Couples ATP hydrolysis with the unwinding of duplex DNA by translocating in the 3'-5' direction.. It catalyses the reaction ATP + H2O = ADP + phosphate + H(+). The heterodimer acts as both an ATP-dependent DNA helicase and an ATP-dependent, dual-direction single-stranded exonuclease. Recognizes the chi site generating a DNA molecule suitable for the initiation of homologous recombination. The AddA nuclease domain is required for chi fragment generation; this subunit has the helicase and 3' -&gt; 5' nuclease activities. This is ATP-dependent helicase/nuclease subunit A from Streptococcus pyogenes serotype M49 (strain NZ131).